The sequence spans 231 residues: AA9 family lytic polysaccharide monooxygenase C (231 aa).

A signal peptide spans 1–18 (MKSGLLFTTASLALTASA). Histidine 19 serves as a coordination point for Cu(2+). Residues cysteine 60 and cysteine 179 are joined by a disulfide bond. N-linked (GlcNAc...) asparagine glycosylation is found at asparagine 69 and asparagine 143. Residues histidine 165 and glutamine 174 each contribute to the O2 site. Tyrosine 176 provides a ligand contact to Cu(2+).

The protein belongs to the polysaccharide monooxygenase AA9 family. It depends on Cu(2+) as a cofactor.

Its subcellular location is the secreted. The catalysed reaction is [(1-&gt;4)-beta-D-glucosyl]n+m + reduced acceptor + O2 = 4-dehydro-beta-D-glucosyl-[(1-&gt;4)-beta-D-glucosyl]n-1 + [(1-&gt;4)-beta-D-glucosyl]m + acceptor + H2O.. In terms of biological role, lytic polysaccharide monooxygenase (LPMO) that depolymerizes crystalline and amorphous polysaccharides via the oxidation of scissile alpha- or beta-(1-4)-glycosidic bonds, yielding C1 oxidation products. Catalysis by LPMOs requires the reduction of the active-site copper from Cu(II) to Cu(I) by a reducing agent and H(2)O(2) or O(2) as a cosubstrate. The polypeptide is AA9 family lytic polysaccharide monooxygenase C (Emericella nidulans (strain FGSC A4 / ATCC 38163 / CBS 112.46 / NRRL 194 / M139) (Aspergillus nidulans)).